Here is a 440-residue protein sequence, read N- to C-terminus: Ribulose bisphosphate carboxylase large chain (440 aa).

K4 carries the post-translational modification N6,N6,N6-trimethyllysine. Residues N113 and T163 each coordinate substrate. K165 functions as the Proton acceptor in the catalytic mechanism. K167 serves as a coordination point for substrate. K191, D193, and E194 together coordinate Mg(2+). Residue K191 is modified to N6-carboxylysine. The Proton acceptor role is filled by H284. Substrate contacts are provided by R285, H317, and S369.

This sequence belongs to the RuBisCO large chain family. Type I subfamily. Heterohexadecamer of 8 large chains and 8 small chains; disulfide-linked. The disulfide link is formed within the large subunit homodimers. Mg(2+) serves as cofactor. Post-translationally, the disulfide bond which can form in the large chain dimeric partners within the hexadecamer appears to be associated with oxidative stress and protein turnover.

Its subcellular location is the plastid. It is found in the chloroplast. The enzyme catalyses 2 (2R)-3-phosphoglycerate + 2 H(+) = D-ribulose 1,5-bisphosphate + CO2 + H2O. The catalysed reaction is D-ribulose 1,5-bisphosphate + O2 = 2-phosphoglycolate + (2R)-3-phosphoglycerate + 2 H(+). RuBisCO catalyzes two reactions: the carboxylation of D-ribulose 1,5-bisphosphate, the primary event in carbon dioxide fixation, as well as the oxidative fragmentation of the pentose substrate in the photorespiration process. Both reactions occur simultaneously and in competition at the same active site. This chain is Ribulose bisphosphate carboxylase large chain, found in Dicksonia antarctica (Australian tree fern).